A 346-amino-acid polypeptide reads, in one-letter code: Phosphoribosylformylglycinamidine cyclo-ligase (346 aa).

The protein belongs to the AIR synthase family.

The protein localises to the cytoplasm. It catalyses the reaction 2-formamido-N(1)-(5-O-phospho-beta-D-ribosyl)acetamidine + ATP = 5-amino-1-(5-phospho-beta-D-ribosyl)imidazole + ADP + phosphate + H(+). The protein operates within purine metabolism; IMP biosynthesis via de novo pathway; 5-amino-1-(5-phospho-D-ribosyl)imidazole from N(2)-formyl-N(1)-(5-phospho-D-ribosyl)glycinamide: step 2/2. This Bacillus cereus (strain AH187) protein is Phosphoribosylformylglycinamidine cyclo-ligase.